Here is a 1294-residue protein sequence, read N- to C-terminus: ATPase PglY (1294 aa).

The disordered stretch occupies residues 1205–1263 (TQAAATPPPAPAASQPTAGDLSLDTPTSDPRIPYTSQETPTSSGGAGTARTSGGRRTTA). The segment covering 1228–1244 (DTPTSDPRIPYTSQETP) has biased composition (polar residues). Low complexity predominate over residues 1252–1263 (TARTSGGRRTTA).

In terms of biological role, BREX systems (bacteriophage exclusion) provide immunity against bacteriophage. Part of a type 2 BREX system. Previously called the phage growth limitation (Pgl) system, it confers protection against bacteriophage phiC31. The bacteria allows one cycle of phage infection, but subsequent cycles are impaired, protecting the original bacterial colony. The system undergoes high rates (10(-3) to 10(-4)) of phase reversion, i.e. loss and regain of phiC31 resistance. When the pglW-pglX-pglY-pglZ genes are transformed into a susceptible S.lividans (strain 1326) they confer resistance to infection by phage phiC31 and phiBT1; all 4 genes are necessary. Functionally, hydrolyzes ATP but not AMP, ADP, GMP, GDP or GTP; activity is inhibited by the non-hydrolyzable ATP analog 5-adenylyl beta,gamma-imidodiphosphate. This is ATPase PglY from Streptomyces coelicolor (strain ATCC BAA-471 / A3(2) / M145).